The chain runs to 626 residues: DNA mismatch repair protein MutL (626 aa).

It belongs to the DNA mismatch repair MutL/HexB family.

Its function is as follows. This protein is involved in the repair of mismatches in DNA. It is required for dam-dependent methyl-directed DNA mismatch repair. May act as a 'molecular matchmaker', a protein that promotes the formation of a stable complex between two or more DNA-binding proteins in an ATP-dependent manner without itself being part of a final effector complex. This chain is DNA mismatch repair protein MutL, found in Cellvibrio japonicus (strain Ueda107) (Pseudomonas fluorescens subsp. cellulosa).